Consider the following 324-residue polypeptide: MSASSQSRPTTIACLLGPTASGKTAAALALAARRPIEIVSVDSALVYRDMDIGTAKPSREERASVPHHLIDIIDPADAYSAAEFRADTLRLIGEIVARGRTPLLAGGTMLYYKALTQGLNDLPGADPEVRAALDADAARDGWPALHARLAQVDPDTAARLAPNDSQRIQRALEIFMLSGQPMSALLAAPRRTDDAAAAYRFVPVALEPSDRAVLHTRIAQRFDAMLDAGFIDEVERLRRRDDLHPDLPSMRCVGYRQAWEYLDGDTDYRTMRDKGIFATRQLCKRQITWLRAMPERIVVDCIAPDATARALDALERVLDGRTPD.

17–24 (GPTASGKT) lines the ATP pocket. 19–24 (TASGKT) lines the substrate pocket. 4 interaction with substrate tRNA regions span residues 42-45 (DSAL), 166-170 (QRIQR), 251-256 (RCVGYR), and 284-291 (KRQITWLR).

Belongs to the IPP transferase family. As to quaternary structure, monomer. It depends on Mg(2+) as a cofactor.

It carries out the reaction adenosine(37) in tRNA + dimethylallyl diphosphate = N(6)-dimethylallyladenosine(37) in tRNA + diphosphate. Its function is as follows. Catalyzes the transfer of a dimethylallyl group onto the adenine at position 37 in tRNAs that read codons beginning with uridine, leading to the formation of N6-(dimethylallyl)adenosine (i(6)A). The sequence is that of tRNA dimethylallyltransferase from Burkholderia orbicola (strain AU 1054).